We begin with the raw amino-acid sequence, 583 residues long: NEDD4-binding protein 2-like 2 (583 aa).

Residues 162–197 are a coiled coil; sequence NSEKSEIDNELFQFYKEIEELEKEKDGFENSCKESE. Residues 549–575 are disordered; sequence EPSHKSTQRPPPPQGRQRWGGSLGSHN.

The chain is NEDD4-binding protein 2-like 2 (N4BP2L2) from Homo sapiens (Human).